We begin with the raw amino-acid sequence, 167 residues long: Thiol peroxidase (167 aa).

The region spanning 18–167 (VKVGDQAPDF…PIEAAKALVK (150 aa)) is the Thioredoxin domain. The active-site Cysteine sulfenic acid (-SOH) intermediate is Cys-60. Residues Cys-60 and Cys-94 are joined by a disulfide bond.

Belongs to the peroxiredoxin family. Tpx subfamily. As to quaternary structure, homodimer.

The enzyme catalyses a hydroperoxide + [thioredoxin]-dithiol = an alcohol + [thioredoxin]-disulfide + H2O. Its function is as follows. Thiol-specific peroxidase that catalyzes the reduction of hydrogen peroxide and organic hydroperoxides to water and alcohols, respectively. Plays a role in cell protection against oxidative stress by detoxifying peroxides. The protein is Thiol peroxidase of Bacillus subtilis (strain 168).